We begin with the raw amino-acid sequence, 89 residues long: Small ribosomal subunit protein uS15 (89 aa).

It belongs to the universal ribosomal protein uS15 family. Part of the 30S ribosomal subunit. Forms a bridge to the 50S subunit in the 70S ribosome, contacting the 23S rRNA.

Its function is as follows. One of the primary rRNA binding proteins, it binds directly to 16S rRNA where it helps nucleate assembly of the platform of the 30S subunit by binding and bridging several RNA helices of the 16S rRNA. Functionally, forms an intersubunit bridge (bridge B4) with the 23S rRNA of the 50S subunit in the ribosome. The chain is Small ribosomal subunit protein uS15 from Photobacterium profundum (strain SS9).